A 370-amino-acid polypeptide reads, in one-letter code: Histidinol-phosphate aminotransferase 1 (370 aa).

Position 222 is an N6-(pyridoxal phosphate)lysine (Lys222).

This sequence belongs to the class-II pyridoxal-phosphate-dependent aminotransferase family. Histidinol-phosphate aminotransferase subfamily. In terms of assembly, homodimer. It depends on pyridoxal 5'-phosphate as a cofactor.

It catalyses the reaction L-histidinol phosphate + 2-oxoglutarate = 3-(imidazol-4-yl)-2-oxopropyl phosphate + L-glutamate. The protein operates within amino-acid biosynthesis; L-histidine biosynthesis; L-histidine from 5-phospho-alpha-D-ribose 1-diphosphate: step 7/9. This Bacillus cereus (strain ATCC 14579 / DSM 31 / CCUG 7414 / JCM 2152 / NBRC 15305 / NCIMB 9373 / NCTC 2599 / NRRL B-3711) protein is Histidinol-phosphate aminotransferase 1 (hisC1).